A 506-amino-acid chain; its full sequence is MGIKGLIPFLSEKVPSSISELSLECLSGESLAIDASAALYQFTIAIRDSSYFSSLVNSKGESTSHIYGLMNRCSKLLEYGIKPVFVFDSKPPELKSKTLDKRRQKREEAKTDFKKAISEGDKESAKKLVGRTVKVTKDMNDSAKKLLRLMGIPVIEALEEAEAQCAYLVTKNLCHFVASEDTDTLVFGGWFLLRNVTSSANKKIVKVDLQKVLDGLEFNFDQFVDFCILCGCDYCDTLEGVGPKTAYSLVKKYQSLEEIVRFKGGDYDEFKEAKDYFLSPKVNEYDENSVKMGTIDPEGLTEFLVQENNFSKERVEKFIEKLLKFKTKKIQTSLLSFLTNPQPTNKSKSLDEGPKQSSTEDYKVNTNPSTKGSNVYTTDTNSTKDTKGIECTATTTNNNLENKVKIENEENDTGRRDSIDDLFKEFEDETNLFEQDEFEPKSKEYNLEKQHELELNVHNRNVILIDDDDDEVLTTANSEKMNCEIGKVKEEPNKKGKFSLISIYIF.

The N-domain stretch occupies residues 1 to 106 (MGIKGLIPFL…KTLDKRRQKR (106 aa)). A Mg(2+)-binding site is contributed by aspartate 34. Arginine 47 and arginine 72 together coordinate DNA. Residues aspartate 88, glutamate 160, glutamate 162, aspartate 181, and aspartate 183 each contribute to the Mg(2+) site. The segment at 124 to 253 (SAKKLVGRTV…KTAYSLVKKY (130 aa)) is I-domain. Residue glutamate 160 coordinates DNA. Glycine 231 and aspartate 233 together coordinate DNA. Position 233 (aspartate 233) interacts with Mg(2+). The interaction with PCNA stretch occupies residues 330 to 338 (IQTSLLSFL). The segment covering 338-347 (LTNPQPTNKS) has biased composition (polar residues). A disordered region spans residues 338–388 (LTNPQPTNKSKSLDEGPKQSSTEDYKVNTNPSTKGSNVYTTDTNSTKDTKG). The segment covering 348-363 (KSLDEGPKQSSTEDYK) has biased composition (basic and acidic residues). A compositionally biased stretch (polar residues) spans 364–381 (VNTNPSTKGSNVYTTDTN).

Belongs to the XPG/RAD2 endonuclease family. FEN1 subfamily. In terms of assembly, interacts with PCNA. Three molecules of FEN1 bind to one PCNA trimer with each molecule binding to one PCNA monomer. PCNA stimulates the nuclease activity without altering cleavage specificity. Mg(2+) serves as cofactor. In terms of processing, phosphorylated. Phosphorylation upon DNA damage induces relocalization to the nuclear plasma.

The protein localises to the nucleus. It is found in the nucleolus. Its subcellular location is the nucleoplasm. The protein resides in the mitochondrion. In terms of biological role, structure-specific nuclease with 5'-flap endonuclease and 5'-3' exonuclease activities involved in DNA replication and repair. During DNA replication, cleaves the 5'-overhanging flap structure that is generated by displacement synthesis when DNA polymerase encounters the 5'-end of a downstream Okazaki fragment. It enters the flap from the 5'-end and then tracks to cleave the flap base, leaving a nick for ligation. Also involved in the long patch base excision repair (LP-BER) pathway, by cleaving within the apurinic/apyrimidinic (AP) site-terminated flap. Acts as a genome stabilization factor that prevents flaps from equilibrating into structures that lead to duplications and deletions. Also possesses 5'-3' exonuclease activity on nicked or gapped double-stranded DNA, and exhibits RNase H activity. Also involved in replication and repair of rDNA and in repairing mitochondrial DNA. The protein is Flap endonuclease 1 of Theileria annulata.